Consider the following 530-residue polypeptide: Membrane-bound lytic murein transglycosylase F (530 aa).

Positions 1–27 are cleaved as a signal peptide; sequence MTPFAYKLPIRALWLGLLSLLLVGCQI. The non-LT domain stretch occupies residues 28-279; the sequence is DSEPKSELEK…SLEEKYIGHI (252 aa). The interval 280 to 530 is LT domain; it reads GAFDYVDTRA…SAKPSTESKN (251 aa). The active site involves E324. The segment at 505 to 530 is disordered; sequence ALESESLENSESSAEPSAKPSTESKN. The span at 513-530 shows a compositional bias: low complexity; the sequence is NSESSAEPSAKPSTESKN.

In the N-terminal section; belongs to the bacterial solute-binding protein 3 family. It in the C-terminal section; belongs to the transglycosylase Slt family.

It is found in the cell outer membrane. The enzyme catalyses Exolytic cleavage of the (1-&gt;4)-beta-glycosidic linkage between N-acetylmuramic acid (MurNAc) and N-acetylglucosamine (GlcNAc) residues in peptidoglycan, from either the reducing or the non-reducing ends of the peptidoglycan chains, with concomitant formation of a 1,6-anhydrobond in the MurNAc residue.. In terms of biological role, murein-degrading enzyme that degrades murein glycan strands and insoluble, high-molecular weight murein sacculi, with the concomitant formation of a 1,6-anhydromuramoyl product. Lytic transglycosylases (LTs) play an integral role in the metabolism of the peptidoglycan (PG) sacculus. Their lytic action creates space within the PG sacculus to allow for its expansion as well as for the insertion of various structures such as secretion systems and flagella. The chain is Membrane-bound lytic murein transglycosylase F from Vibrio cholerae serotype O1 (strain ATCC 39541 / Classical Ogawa 395 / O395).